The chain runs to 618 residues: 1-deoxy-D-xylulose-5-phosphate synthase (618 aa).

Residues H70 and 111–113 (GHS) contribute to the thiamine diphosphate site. D142 contributes to the Mg(2+) binding site. Thiamine diphosphate contacts are provided by residues 143 to 144 (GS), N171, Y278, and E360. Position 171 (N171) interacts with Mg(2+).

The protein belongs to the transketolase family. DXPS subfamily. As to quaternary structure, homodimer. Mg(2+) is required as a cofactor. The cofactor is thiamine diphosphate.

It carries out the reaction D-glyceraldehyde 3-phosphate + pyruvate + H(+) = 1-deoxy-D-xylulose 5-phosphate + CO2. It functions in the pathway metabolic intermediate biosynthesis; 1-deoxy-D-xylulose 5-phosphate biosynthesis; 1-deoxy-D-xylulose 5-phosphate from D-glyceraldehyde 3-phosphate and pyruvate: step 1/1. Functionally, catalyzes the acyloin condensation reaction between C atoms 2 and 3 of pyruvate and glyceraldehyde 3-phosphate to yield 1-deoxy-D-xylulose-5-phosphate (DXP). The polypeptide is 1-deoxy-D-xylulose-5-phosphate synthase (Helicobacter pylori (strain J99 / ATCC 700824) (Campylobacter pylori J99)).